We begin with the raw amino-acid sequence, 252 residues long: uncharacterized protein (252 aa).

16 to 40 is a binding site for NADP(+); sequence LVTGASDGIGREAAMTYARYGATVI. Substrate is bound at residue S152. Y165 serves as the catalytic Proton acceptor.

Belongs to the short-chain dehydrogenases/reductases (SDR) family.

This is an uncharacterized protein from Escherichia coli (strain K12).